A 59-amino-acid polypeptide reads, in one-letter code: Large ribosomal subunit protein uL30 (59 aa).

The protein belongs to the universal ribosomal protein uL30 family. In terms of assembly, part of the 50S ribosomal subunit.

This chain is Large ribosomal subunit protein uL30, found in Geobacter sulfurreducens (strain ATCC 51573 / DSM 12127 / PCA).